The following is a 222-amino-acid chain: 2-hydroxy-3-keto-5-methylthiopentenyl-1-phosphate phosphatase (222 aa).

It belongs to the HAD-like hydrolase superfamily. MtnX family.

The catalysed reaction is 2-hydroxy-5-methylsulfanyl-3-oxopent-1-enyl phosphate + H2O = 1,2-dihydroxy-5-(methylsulfanyl)pent-1-en-3-one + phosphate. The protein operates within amino-acid biosynthesis; L-methionine biosynthesis via salvage pathway; L-methionine from S-methyl-5-thio-alpha-D-ribose 1-phosphate: step 4/6. Functionally, dephosphorylates 2-hydroxy-3-keto-5-methylthiopentenyl-1-phosphate (HK-MTPenyl-1-P) yielding 1,2-dihydroxy-3-keto-5-methylthiopentene (DHK-MTPene). The protein is 2-hydroxy-3-keto-5-methylthiopentenyl-1-phosphate phosphatase of Brevibacillus brevis (strain 47 / JCM 6285 / NBRC 100599).